The primary structure comprises 1303 residues: Alpha,alpha-trehalose-phosphate synthase [UDP-forming] 2 (1303 aa).

Disordered regions lie at residues 1 to 48 and 205 to 251; these read MTVV…NNTT and LQRR…FRGK. Low complexity predominate over residues 212-221; sequence SSRGGSLRGS.

In the N-terminal section; belongs to the glycosyltransferase 20 family. The protein in the C-terminal section; belongs to the gob-1 trehalose phosphatase family.

It carries out the reaction D-glucose 6-phosphate + UDP-alpha-D-glucose = alpha,alpha-trehalose 6-phosphate + UDP + H(+). In terms of biological role, catalyzes the production of trehalose from glucose-6-phosphate and UDP-alpha-D-glucose in a 2 step process. The sequence is that of Alpha,alpha-trehalose-phosphate synthase [UDP-forming] 2 (tps-2) from Aphelenchoides avenae (Mycophagous nematode worm).